The chain runs to 122 residues: MSLTVTTKENEALVNEIRSLVEISRQNSAKIWRDMAERLANGRRRYASINLYKIDKFAKDGDVIVVPGSVLGVGKITKKVTIGAVHFSRAATEKLVRSGCAFMSLSDVAKANPKGTNVKIMR.

Belongs to the eukaryotic ribosomal protein eL18 family.

This chain is Large ribosomal subunit protein eL18, found in Thermoplasma volcanium (strain ATCC 51530 / DSM 4299 / JCM 9571 / NBRC 15438 / GSS1).